A 356-amino-acid chain; its full sequence is D-xylulose reductase (356 aa).

Residues C44, H69, and E155 each contribute to the Zn(2+) site. 179-184 (GAGPIG) is an NAD(+) binding site.

It belongs to the zinc-containing alcohol dehydrogenase family. Zn(2+) is required as a cofactor.

The enzyme catalyses xylitol + NAD(+) = D-xylulose + NADH + H(+). Its pathway is carbohydrate degradation; L-arabinose degradation via L-arabinitol; D-xylulose 5-phosphate from L-arabinose (fungal route): step 4/5. This Saccharomyces cerevisiae (strain ATCC 204508 / S288c) (Baker's yeast) protein is D-xylulose reductase (XYL2).